Here is a 187-residue protein sequence, read N- to C-terminus: Mitochondrial intermembrane space import and assembly protein 40 (187 aa).

The N-terminal 24 residues, methionine 1 to leucine 24, are a transit peptide targeting the mitochondrion. Residues isoleucine 25 to arginine 43 lie on the Mitochondrial matrix side of the membrane. The helical; Signal-anchor for type II membrane protein transmembrane segment at leucine 44–alanine 61 threads the bilayer. The Mitochondrial intermembrane segment spans residues glutamate 62–valine 187. The disordered stretch occupies residues lysine 73 to glycine 115. Basic and acidic residues predominate over residues isoleucine 87–alanine 98. Intrachain disulfides connect cysteine 146–cysteine 148 and cysteine 167–cysteine 180. The region spanning histidine 154–valine 187 is the CHCH domain. A Cx9C motif motif is present at residues cysteine 157–cysteine 167.

Monomer. Cu(2+) is required as a cofactor. Zn(2+) serves as cofactor.

Its subcellular location is the mitochondrion inner membrane. Its function is as follows. Required for the import and folding of small cysteine-containing proteins (small Tim) in the mitochondrial intermembrane space (IMS). Forms a redox cycle with ERV1 that involves a disulfide relay system. Precursor proteins to be imported into the IMS are translocated in their reduced form into the mitochondria. The oxidized form of MIA40 forms a transient intermolecular disulfide bridge with the reduced precursor protein, resulting in oxidation of the precursor protein that now contains an intramolecular disulfide bond and is able to undergo folding in the IMS. The polypeptide is Mitochondrial intermembrane space import and assembly protein 40 (mia40) (Aspergillus oryzae (strain ATCC 42149 / RIB 40) (Yellow koji mold)).